Here is a 178-residue protein sequence, read N- to C-terminus: Nicotinamide-nucleotide adenylyltransferase (178 aa).

Belongs to the archaeal NMN adenylyltransferase family.

The protein localises to the cytoplasm. The enzyme catalyses beta-nicotinamide D-ribonucleotide + ATP + H(+) = diphosphate + NAD(+). It functions in the pathway cofactor biosynthesis; NAD(+) biosynthesis; NAD(+) from nicotinamide D-ribonucleotide: step 1/1. This is Nicotinamide-nucleotide adenylyltransferase from Pyrobaculum neutrophilum (strain DSM 2338 / JCM 9278 / NBRC 100436 / V24Sta) (Thermoproteus neutrophilus).